Consider the following 367-residue polypeptide: MSIFDVLTASAEMMPSHYKDMSTGEMEKRVAAIKRAFGKRLFIPGHHYQKDEVIQFADTAGDSLQLAQVAEKNKEAEYIVFCGVHFMAETADMLTDDNQTVILPDMRAGCSMADMADIQQTDKAWQELQELYGNTIIPLTYVNSTAEIKAFVGRHGGATVTSSNARSVLKWAFKQKERILFLPDQHLGRNTAYDLGIPLTEMAVWDPVQNRLLTDHPENIKVILWKGHCSVHEKFTAENISQLRQRDSGIRIIVHPECSREVVSLSDDSGSTKYIIDTIEQAEPGSKWAIGTEMNLVQRLIHSHPDKQIESLNPDMCPCLTMNRIDLPHLLWSLEQLEKGEPKGVIKVPEAVRTEALRALNRMLSHT.

His46 and Ser63 together coordinate iminosuccinate. Cys110 is a binding site for [4Fe-4S] cluster. Iminosuccinate is bound by residues 141–143 (YVN) and Ser162. Cys229 provides a ligand contact to [4Fe-4S] cluster. Residues 255–257 (HPE) and Thr272 contribute to the iminosuccinate site. Cys319 provides a ligand contact to [4Fe-4S] cluster.

It belongs to the quinolinate synthase family. Type 3 subfamily. [4Fe-4S] cluster serves as cofactor.

Its subcellular location is the cytoplasm. It catalyses the reaction iminosuccinate + dihydroxyacetone phosphate = quinolinate + phosphate + 2 H2O + H(+). It participates in cofactor biosynthesis; NAD(+) biosynthesis; quinolinate from iminoaspartate: step 1/1. Functionally, catalyzes the condensation of iminoaspartate with dihydroxyacetone phosphate to form quinolinate. The sequence is that of Quinolinate synthase from Bacillus velezensis (strain DSM 23117 / BGSC 10A6 / LMG 26770 / FZB42) (Bacillus amyloliquefaciens subsp. plantarum).